Here is a 337-residue protein sequence, read N- to C-terminus: Putative high mobility group B protein 11 (337 aa).

Residues 34–125 (VRNPELFWEM…MLFEFEHLYY (92 aa)) enclose the ARID domain. Disordered stretches follow at residues 197-221 (TKRG…QRTG) and 298-337 (AGTS…EVSQ). The HMG box DNA-binding region spans 215-282 (PKRQRTGYNF…RYKMEILQYR (68 aa)). Residues 319–329 (TDACTSASSAA) show a composition bias toward low complexity.

Belongs to the HMGB family.

Its subcellular location is the nucleus. Functionally, binds preferentially DNA with A/T-rich content. The chain is Putative high mobility group B protein 11 (HMGB11) from Arabidopsis thaliana (Mouse-ear cress).